We begin with the raw amino-acid sequence, 447 residues long: Neuronal acetylcholine receptor subunit alpha-10 (447 aa).

The signal sequence occupies residues 1-24; sequence MGTRSHYLDLGFLLLLFLPAECLG. Residues 25–237 lie on the Extracellular side of the membrane; it reads AEGRLAHKLF…FTLLLRRRAA (213 aa). 2 N-linked (GlcNAc...) asparagine glycosylation sites follow: Asn-40 and Asn-56. 2 disulfide bridges follow: Cys-154/Cys-168 and Cys-218/Cys-219. Helical transmembrane passes span 238–258, 268–288, and 302–322; these read AYVC…PLAF, VSLG…LAES, and YMAT…IMNL. The Cytoplasmic segment spans residues 323–425; sequence HYCGPNAHPV…WKRLARVMDR (103 aa). Residues 426–446 traverse the membrane as a helical segment; that stretch reads FFLGIFFCMALVMSLIVLVQA.

Belongs to the ligand-gated ion channel (TC 1.A.9) family. Acetylcholine receptor (TC 1.A.9.1) subfamily. Alpha-10/CHRNA10 sub-subfamily. Forms homo- or heterooligomeric channels in conjunction with CHRNA10. The native outer hair cell receptor may be composed of CHRNA9:CHRNA10 heterooligomers. Found in the stoichiometric form (CHRNA9)2:(CHRNA10)3. Expressed in the outer hair cells of the cochlea and the neurons of dorsal root ganglia.

It is found in the synaptic cell membrane. The protein localises to the cell membrane. The enzyme catalyses Ca(2+)(in) = Ca(2+)(out). It carries out the reaction Mg(2+)(in) = Mg(2+)(out). The catalysed reaction is K(+)(in) = K(+)(out). It catalyses the reaction Na(+)(in) = Na(+)(out). With respect to regulation, activated by a myriad of ligands such as acetylcholine. AChR activity is inhibited by the antagonist alpha-conotoxins RgIA and GeXXA, small disulfide-constrained peptides from cone snails. Component of neuronal acetylcholine receptors (nAChRs) that function as pentameric, ligand-gated cation channels with high calcium permeability among other activities. nAChRs are excitatory neurotrasnmitter receptors formed by a collection of nAChR subunits known to mediate synaptic transmission in the nervous system and the neuromuscular junction. Each nAchR subunit confers differential attributes to channel properties, including activation, deactivation and desensitization kinetics, pH sensitivity, cation permeability, and binding to allosteric modulators. Forms heteropentamers with CHRNA9. Expressed in the inner ear, in sympathetic neurons and in other non-neuronal cells, such as skin keratinocytes and lymphocytes. nAChR formed by CHRNA9:CHRNA10 mediate central nervous system control of auditory and vestibular sensory processing. The channel is permeable to a range of divalent cations including calcium, the influx of which may activate a potassium current which hyperpolarizes the cell membrane. In the ear, mediates synaptic transmission between efferent olivocochlear fibers and hair cells of the cochlea, this may lead to a reduction in basilar membrane motion, altering the activity of auditory nerve fibers and reducing the range of dynamic hearing. This may protect against acoustic trauma. May also regulate keratinocyte adhesion. The chain is Neuronal acetylcholine receptor subunit alpha-10 (Chrna10) from Rattus norvegicus (Rat).